The primary structure comprises 399 residues: Succinate--CoA ligase [ADP-forming] subunit beta (399 aa).

Residues 9–254 (KELLAKYGIG…ETEEDPAEVE (246 aa)) form the ATP-grasp domain. ATP-binding positions include Lys-46, 53-55 (GRG), Val-112, and Glu-117. Residues Asn-209 and Asp-223 each coordinate Mg(2+). Residues Asn-274 and 331–333 (GIM) contribute to the substrate site.

Belongs to the succinate/malate CoA ligase beta subunit family. In terms of assembly, heterotetramer of two alpha and two beta subunits. Mg(2+) is required as a cofactor.

It catalyses the reaction succinate + ATP + CoA = succinyl-CoA + ADP + phosphate. The catalysed reaction is GTP + succinate + CoA = succinyl-CoA + GDP + phosphate. It functions in the pathway carbohydrate metabolism; tricarboxylic acid cycle; succinate from succinyl-CoA (ligase route): step 1/1. In terms of biological role, succinyl-CoA synthetase functions in the citric acid cycle (TCA), coupling the hydrolysis of succinyl-CoA to the synthesis of either ATP or GTP and thus represents the only step of substrate-level phosphorylation in the TCA. The beta subunit provides nucleotide specificity of the enzyme and binds the substrate succinate, while the binding sites for coenzyme A and phosphate are found in the alpha subunit. This chain is Succinate--CoA ligase [ADP-forming] subunit beta, found in Erythrobacter litoralis (strain HTCC2594).